The chain runs to 350 residues: Divinyl chlorophyll a/b light-harvesting protein PcbB (350 aa).

Helical transmembrane passes span 27-47 (FLAAHIAHTGLMAFWAGSFTL), 89-109 (IVVTAVLHLVLSMVYAAGGLM), 141-161 (FILGHHLFLLGLGNVQFVEWA), 202-222 (VMGGHAFLALFMMSGGLWHIV), 244-264 (LSWALAGVGWMALVAAFWCAS), and 305-325 (LTNIHYYLGFFYIQGHLWHAL).

The protein belongs to the PsbB/PsbC family. IsiA/Pcb subfamily. In terms of assembly, the antenna complex consists of divinyl chlorophylls (a and b) and divinyl chlorophyll a/b binding proteins. Under iron-starvation forms a complex with PSI, consisting of a PSI trimer surrounded by a ring composed of 18 PcbB subunits. It depends on divinyl chlorophyll a as a cofactor. Divinyl chlorophyll b serves as cofactor.

It localises to the cellular thylakoid membrane. Its function is as follows. The antenna complex functions as a light receptor, it captures and delivers excitation energy to photosystems I. The Prochlorales pcb genes are not related to higher plant LHCs. The protein is Divinyl chlorophyll a/b light-harvesting protein PcbB (pcbB) of Prochlorococcus marinus (strain MIT 9313).